The chain runs to 238 residues: Lytic polysaccharide monooxygenase NCU01050 (238 aa).

Residues 1 to 15 (MKVLAPLVLASAASA) form the signal peptide. Position 16 (His-16) interacts with Cu(2+). Residue Glu-45 participates in O2 binding. Disulfide bonds link Cys-54–Cys-186 and Cys-156–Cys-238. N-linked (GlcNAc...) asparagine glycosylation occurs at Asn-75. His-99 is a Cu(2+) binding site. His-172 and Gln-181 together coordinate O2. The active-site Proton donor is the His-172. Tyr-183 contacts Cu(2+).

This sequence belongs to the polysaccharide monooxygenase AA9 family. In terms of assembly, monomer. It depends on Cu(2+) as a cofactor. Post-translationally, N-linked glycans containing mannose and N-acetylglucosamine.

Its subcellular location is the secreted. It catalyses the reaction [(1-&gt;4)-beta-D-glucosyl]n+m + reduced acceptor + O2 = 4-dehydro-beta-D-glucosyl-[(1-&gt;4)-beta-D-glucosyl]n-1 + [(1-&gt;4)-beta-D-glucosyl]m + acceptor + H2O.. Its pathway is glycan metabolism; cellulose degradation. With respect to regulation, inhibited by increasing levels of ascorbic acid. Catalyzes the oxidative cleavage of glycosidic bonds in cellulosic substrates via a copper-dependent mechanism. In the presence of an exogenous reductant ascorbic acid, degrades phosphoric acid swollen cellulose (PASC) to cello-oligosaccharides and 4-ketoaldoses, the end products oxidized at the non-reducing end. Somewhat active toward tamarind xyloglucan and konjac glucomannan, with improved activity with glucomannan in the presence of PASC. H(2)O(2) is able to substitute for O(2) in reactions with PASC, xyloglucan and glucomannan. Very weak activity on cellopentaose. No activity with birchwood xylan or ivory nut mannan. Disrupts plant cell wall polysaccharide substrates, such as recalcitrant crystalline cellulose. This chain is Lytic polysaccharide monooxygenase NCU01050, found in Neurospora crassa (strain ATCC 24698 / 74-OR23-1A / CBS 708.71 / DSM 1257 / FGSC 987).